Consider the following 527-residue polypeptide: EGF domain-specific O-linked N-acetylglucosamine transferase (527 aa).

An N-terminal signal peptide occupies residues 1–17 (MFMLLVFGALLPEVPLS). A Required for optimal activity motif is present at residues 295–297 (DYD). Residue Asn-354 is glycosylated (N-linked (GlcNAc...) asparagine). Positions 524–527 (HDEL) match the Prevents secretion from ER motif.

The protein belongs to the glycosyltransferase 61 family.

Its subcellular location is the endoplasmic reticulum lumen. The enzyme catalyses L-seryl-[protein] + UDP-N-acetyl-alpha-D-glucosamine = 3-O-(N-acetyl-beta-D-glucosaminyl)-L-seryl-[protein] + UDP + H(+). The catalysed reaction is L-threonyl-[protein] + UDP-N-acetyl-alpha-D-glucosamine = 3-O-(N-acetyl-beta-D-glucosaminyl)-L-threonyl-[protein] + UDP + H(+). Catalyzes the transfer of a single N-acetylglucosamine from UDP-GlcNAc to a serine or threonine residue in extracellular proteins resulting in their modification with a beta-linked N-acetylglucosamine (O-GlcNAc). Specifically glycosylates the Thr residue located between the fifth and sixth conserved cysteines of folded EGF-like domains. The sequence is that of EGF domain-specific O-linked N-acetylglucosamine transferase (EOGT) from Bos taurus (Bovine).